We begin with the raw amino-acid sequence, 341 residues long: Peroxisomal membrane protein PEX14 (341 aa).

Position 2 is an N-acetylserine (S2). The short motif at 86 to 94 is the SH3-binding element; sequence PPTLPHRDW. Positions 276–341 are disordered; it reads MQEESDKEKE…QNGQVEDSIP (66 aa). A compositionally biased stretch (basic and acidic residues) spans 279-295; sequence ESDKEKENGSDANKDDN. A compositionally biased stretch (polar residues) spans 308–341; it reads IDSNASIPEWQKNTAANEISVPDWQNGQVEDSIP. S313 is subject to Phosphoserine.

Belongs to the peroxin-14 family. In terms of assembly, interacts with PEX13 (via SH3 domain); forming the PEX13-PEX14 docking complex. Interacts with PEX5 (via WxxxF/Y motifs). Interacts with PEX7. Interacts with PEX9.

The protein resides in the peroxisome membrane. Functionally, component of the PEX13-PEX14 docking complex, a translocon channel that specifically mediates the import of peroxisomal cargo proteins bound to PEX5 or PEX21 receptors. The PEX13-PEX14 docking complex forms a large import pore which can be opened to a diameter of about 9 nm. Mechanistically, PEX5 (or PEX21) receptor along with cargo proteins associates with the PEX14 subunit of the PEX13-PEX14 docking complex in the cytosol, leading to the insertion of the receptor into the organelle membrane with the concomitant translocation of the cargo into the peroxisome matrix. This chain is Peroxisomal membrane protein PEX14, found in Saccharomyces cerevisiae (strain ATCC 204508 / S288c) (Baker's yeast).